A 440-amino-acid chain; its full sequence is Transposon Ty1-JR1 Gag polyprotein (440 aa).

Positions 1–16 (MESQQLSQHSHISHGS) are enriched in low complexity. Disordered stretches follow at residues 1–93 (MESQ…MMTQ), 126–173 (PQSQ…RPPP), and 352–440 (GSRN…PGTY). Composition is skewed to polar residues over residues 48 to 60 (TKAN…TPAS) and 127 to 152 (QSQF…GNTF). The segment covering 153–165 (TDSSSADSDMTST) has biased composition (low complexity). The interval 299–401 (NNGIHINNKV…NSKSKTARAH (103 aa)) is RNA-binding. Low complexity predominate over residues 402–418 (NVSTSNNSPSTDNDSIS). A Phosphoserine modification is found at Ser416. Over residues 419 to 428 (KSTTEPIQLN) the composition is skewed to polar residues. Over residues 429 to 440 (NKHDLHLRPGTY) the composition is skewed to basic and acidic residues.

Homotrimer.

It is found in the cytoplasm. In terms of biological role, capsid protein (CA) is the structural component of the virus-like particle (VLP), forming the shell that encapsulates the retrotransposons dimeric RNA genome. The particles are assembled from trimer-clustered units and there are holes in the capsid shells that allow for the diffusion of macromolecules. CA also has nucleocapsid-like chaperone activity, promoting primer tRNA(i)-Met annealing to the multipartite primer-binding site (PBS), dimerization of Ty1 RNA and initiation of reverse transcription. This chain is Transposon Ty1-JR1 Gag polyprotein (TY1A-JR1), found in Saccharomyces cerevisiae (strain ATCC 204508 / S288c) (Baker's yeast).